The sequence spans 265 residues: tRNA pseudouridine synthase A (265 aa).

Catalysis depends on D52, which acts as the Nucleophile. Residue Y110 coordinates substrate. The tract at residues 244–265 is disordered; sequence FYRDGPPARTPGGTTDAEEDEG.

It belongs to the tRNA pseudouridine synthase TruA family. Homodimer.

The enzyme catalyses uridine(38/39/40) in tRNA = pseudouridine(38/39/40) in tRNA. Functionally, formation of pseudouridine at positions 38, 39 and 40 in the anticodon stem and loop of transfer RNAs. This Myxococcus xanthus protein is tRNA pseudouridine synthase A.